Consider the following 104-residue polypeptide: Protein enhancer of rudimentary (104 aa).

Position 18 is a phosphothreonine; by CK2 (Thr18). Ser24 carries the phosphoserine; by CK2 modification.

Belongs to the E(R) family.

In terms of biological role, acts as an enhancer of the rudimentary gene. Has a role in pyrimidine biosynthesis and the cell cycle. The protein is Protein enhancer of rudimentary (e(r)) of Drosophila virilis (Fruit fly).